The sequence spans 247 residues: UPF0246 protein LSL_1719 (247 aa).

The protein belongs to the UPF0246 family.

This Ligilactobacillus salivarius (strain UCC118) (Lactobacillus salivarius) protein is UPF0246 protein LSL_1719.